The sequence spans 332 residues: PRKC apoptosis WT1 regulator protein (332 aa).

Polar residues-rich tracts occupy residues 1–14 and 52–62; these read MATG…STTD and AQTTAAGTSEL. Residues 1 to 253 are disordered; that stretch reads MATGGYRSSG…HNRDTSAPAN (253 aa). A B30.2/SPRY domain-binding motif motif is present at residues 61-65; that stretch reads ELNHG. Low complexity predominate over residues 65 to 79; the sequence is GPAGAAAPAAPGPGA. The short motif at 137 to 153 is the Nuclear localization signal element; it reads RKGKGQIEKRKLREKRR. Residues 137–195 are selective for apoptosis induction in cancer cells (SAC); that stretch reads RKGKGQIEKRKLREKRRSTGVVNIPAAECLDEYEDDEAGQKERKREDAITQQNTIQNEA. T155 bears the Phosphothreonine; by PKA mark. Over residues 174–184 the composition is skewed to basic and acidic residues; it reads AGQKERKREDA. The stretch at 176–198 forms a coiled coil; the sequence is QKERKREDAITQQNTIQNEAASL. Polar residues predominate over residues 185-195; sequence ITQQNTIQNEA. S223 is modified (phosphoserine). Residues 234–247 are compositionally biased toward basic and acidic residues; sequence PRTDRSGFSRHNRD. Positions 292–332 are leucine-zipper; that stretch reads IGKLKEEIDLLNRDLDDMEDENEQLKQENKTLLKVVGQLTR.

As to quaternary structure, homooligomer. Interacts (via the C-terminal region) with WT1. Interacts with THAP1. Interacts with AATF. Interacts with BACE1. Interacts with SPSB1 (via B30.2/SPRY domain); this interaction is direct and occurs in association with the Elongin BC complex. Interacts with SPSB2 (via B30.2/SPRY domain); this interaction occurs in association with the Elongin BC complex. Interacts with SPSB4 (via B30.2/SPRY domain); this interaction occurs in association with the Elongin BC complex. Component of a ternary complex composed of SQSTM1 and PRKCZ. Interacts with actin. Preferentially phosphorylated at the Thr-155 by PKC in cancer cells.

It localises to the cytoplasm. The protein localises to the nucleus. Its function is as follows. Pro-apoptotic protein capable of selectively inducing apoptosis in cancer cells, sensitizing the cells to diverse apoptotic stimuli and causing regression of tumors in animal models. Induces apoptosis in certain cancer cells by activation of the Fas prodeath pathway and coparallel inhibition of NF-kappa-B transcriptional activity. Inhibits the transcriptional activation and augments the transcriptional repression mediated by WT1. Down-regulates the anti-apoptotic protein BCL2 via its interaction with WT1. Also seems to be a transcriptional repressor by itself. May be directly involved in regulating the amyloid precursor protein (APP) cleavage activity of BACE1. In Rattus norvegicus (Rat), this protein is PRKC apoptosis WT1 regulator protein (Pawr).